Here is a 239-residue protein sequence, read N- to C-terminus: uncharacterized protein (239 aa).

The next 4 membrane-spanning stretches (helical) occupy residues 9-29 (LAIYPIAYVLWGGLMWYSQII), 65-85 (IIYLYGFSSMIIGGIAYYLFI), 94-114 (IILIDLALGWLFAGLIYTFVV), and 167-187 (IYFALAILIPISTLIMGMHWI).

It is found in the cell membrane. This is an uncharacterized protein from Methanocaldococcus jannaschii (strain ATCC 43067 / DSM 2661 / JAL-1 / JCM 10045 / NBRC 100440) (Methanococcus jannaschii).